The following is a 344-amino-acid chain: Heat-inducible transcription repressor HrcA (344 aa).

Belongs to the HrcA family.

In terms of biological role, negative regulator of class I heat shock genes (grpE-dnaK-dnaJ and groELS operons). Prevents heat-shock induction of these operons. The chain is Heat-inducible transcription repressor HrcA from Desulforudis audaxviator (strain MP104C).